A 451-amino-acid polypeptide reads, in one-letter code: Phosphoglucosamine mutase (451 aa).

Serine 103 serves as the catalytic Phosphoserine intermediate. The Mg(2+) site is built by serine 103, aspartate 243, aspartate 245, and aspartate 247. Serine 103 is subject to Phosphoserine.

This sequence belongs to the phosphohexose mutase family. Mg(2+) serves as cofactor. Post-translationally, activated by phosphorylation.

The enzyme catalyses alpha-D-glucosamine 1-phosphate = D-glucosamine 6-phosphate. Functionally, catalyzes the conversion of glucosamine-6-phosphate to glucosamine-1-phosphate. The polypeptide is Phosphoglucosamine mutase (Lactobacillus johnsonii (strain CNCM I-12250 / La1 / NCC 533)).